The following is a 593-amino-acid chain: MFGKKKKRVEISAPSNFEHRVHTGFDQHEQKFTGLPRQWQSLIEESARRPKPLIDPACITSIQPGAPKTIVRGSKGAKDGALTLLLDEFENMSVTRSNSLRRESPPPPARAHQENGMLEERAAPARMAPDKAGSRARATGHSEAGSGSGDRRRVGPEKRPKSSRDGPGGPQEASRDKRPLSGPDVSTPQPGSLTSGTKLAAGRPFNTYPRADTDHPPRGAQGEPHTMAPNGPSATGLAAPQSSSSSRPPTRARGAPSPGVLGPHASEPQLAPPARALAAPAVPPAPGPPGPRSPQREPQRVSHEQFRAALQLVVDPGDPRSYLDNFIKIGEGSTGIVCIATVRSSGKLVAVKKMDLRKQQRRELLFNEVVIMRDYRHENVVEMYNSYLVGDELWVVMEFLEGGALTDIVTHTRMNEEQIAAVCLAVLQALAVLHAQGVIHRDIKSDSILLTHDGRVKLSDFGFCAQVSKEVPRRKSLVGTPYWMAPELISRLPYGPEVDIWSLGVMVIEMVDGEPPYFNEPPLKAMKMIRDNLPPRLKNLHKASPSLKGFLDRLLVRDPAQRATAAELLKHPFLTKAGPPASIVPLMRQHRTR.

In terms of domain architecture, CRIB spans 11 to 24 (ISAPSNFEHRVHTG). A linker region spans residues 25-322 (FDQHEQKFTG…VVDPGDPRSY (298 aa)). Position 41 is a phosphoserine (Ser41). An N6-methyllysine modification is found at Lys78. The segment at 95 to 303 (TRSNSLRRES…PQREPQRVSH (209 aa)) is disordered. Ser104 carries the post-translational modification Phosphoserine. Basic and acidic residues predominate over residues 118–133 (LEERAAPARMAPDKAG). Residue Ser148 is modified to Phosphoserine. Basic and acidic residues predominate over residues 149–164 (GDRRRVGPEKRPKSSR). Residue Ser181 is modified to Phosphoserine. A compositionally biased stretch (polar residues) spans 184 to 197 (DVSTPQPGSLTSGT). Phosphothreonine is present on Thr187. Ser195 carries the phosphoserine modification. A Phosphothreonine modification is found at Thr207. Residues 238–258 (AAPQSSSSSRPPTRARGAPSP) are compositionally biased toward low complexity. Phosphoserine occurs at positions 257 and 266. Residues 267–280 (EPQLAPPARALAAP) are compositionally biased toward low complexity. The span at 281 to 292 (AVPPAPGPPGPR) shows a compositional bias: pro residues. Position 293 is a phosphoserine (Ser293). Residues 294–303 (PQREPQRVSH) are compositionally biased toward basic and acidic residues. One can recognise a Protein kinase domain in the interval 323 to 574 (LDNFIKIGEG…AAELLKHPFL (252 aa)). ATP contacts are provided by residues 329–337 (IGEGSTGIV) and Lys352. Residue Asp442 is the Proton acceptor of the active site. Ser476 carries the post-translational modification Phosphoserine; by autocatalysis.

This sequence belongs to the protein kinase superfamily. STE Ser/Thr protein kinase family. STE20 subfamily. Interacts tightly with GTP-bound but not GDP-bound CDC42/p21 and weakly with RAC1. Interacts with FGFR2 and GRB2. Interacts with INKA1. Interacts with SH3RF2. Interacts with RHOU and PAXI; the PAK4-RHOU complex protects RHOU from ubiquitination and acts as a scaffold to suppport paxillin/PAXI phosphorylation. In terms of processing, autophosphorylated on serine residues when activated by CDC42/p21. Phosphorylated on tyrosine residues upon stimulation of FGFR2. Methylated by SETD6. Post-translationally, polyubiquitinated, leading to its proteasomal degradation.

It is found in the cytoplasm. The catalysed reaction is L-seryl-[protein] + ATP = O-phospho-L-seryl-[protein] + ADP + H(+). The enzyme catalyses L-threonyl-[protein] + ATP = O-phospho-L-threonyl-[protein] + ADP + H(+). Its activity is regulated as follows. Inhibited by INKA1; which inhibits the serine/threonine-protein kinase activity by binding PAK4 in a substrate-like manner. Functionally, serine/threonine protein kinase that plays a role in a variety of different signaling pathways including cytoskeleton regulation, cell migration, growth, proliferation or cell survival. Activation by various effectors including growth factor receptors or active CDC42 and RAC1 results in a conformational change and a subsequent autophosphorylation on several serine and/or threonine residues. Phosphorylates and inactivates the protein phosphatase SSH1, leading to increased inhibitory phosphorylation of the actin binding/depolymerizing factor cofilin. Decreased cofilin activity may lead to stabilization of actin filaments. Phosphorylates LIMK1, a kinase that also inhibits the activity of cofilin. Phosphorylates integrin beta5/ITGB5 and thus regulates cell motility. Phosphorylates ARHGEF2 and activates the downstream target RHOA that plays a role in the regulation of assembly of focal adhesions and actin stress fibers. Stimulates cell survival by phosphorylating the BCL2 antagonist of cell death BAD. Alternatively, inhibits apoptosis by preventing caspase-8 binding to death domain receptors in a kinase independent manner. Plays a role in cell-cycle progression by controlling levels of the cell-cycle regulatory protein CDKN1A and by phosphorylating RAN. Promotes kinase-independent stabilization of RHOU, thereby contributing to focal adhesion disassembly during cell migration. The chain is Serine/threonine-protein kinase PAK 4 from Mus musculus (Mouse).